The sequence spans 210 residues: Oxygen-insensitive NADPH nitroreductase (210 aa).

An NADP(+)-binding site is contributed by 150–155; it reads GVSLMG.

It belongs to the nitroreductase family.

Its function is as follows. Reduction of a variety of nitroaromatic compounds using NADPH as source of reducing equivalents; two electrons are transferred. The sequence is that of Oxygen-insensitive NADPH nitroreductase (rdxA) from Helicobacter pylori (strain J99 / ATCC 700824) (Campylobacter pylori J99).